We begin with the raw amino-acid sequence, 460 residues long: Argininosuccinate lyase (460 aa).

This sequence belongs to the lyase 1 family. Argininosuccinate lyase subfamily.

The protein resides in the cytoplasm. It carries out the reaction 2-(N(omega)-L-arginino)succinate = fumarate + L-arginine. It participates in amino-acid biosynthesis; L-arginine biosynthesis; L-arginine from L-ornithine and carbamoyl phosphate: step 3/3. This is Argininosuccinate lyase from Campylobacter jejuni (strain RM1221).